The sequence spans 992 residues: Disks large-associated protein 1 (992 aa).

Disordered stretches follow at residues 150–209 (TKSH…SWWS) and 355–376 (KAMGDEDSGDSDTSPKPSPKVA). Position 169 is a phosphoserine (serine 169). Residues 194–209 (RSNASNASPTSPSWWS) show a composition bias toward low complexity. A phosphoserine mark is found at serine 362, serine 365, serine 368, serine 372, serine 389, serine 418, serine 421, serine 425, serine 428, serine 437, serine 509, serine 516, and serine 578. Position 579 is a phosphothreonine (threonine 579). 2 positions are modified to phosphoserine: serine 581 and serine 605. Threonine 606 carries the phosphothreonine modification. Phosphoserine occurs at positions 608 and 611. 2 interaction with DYL2 regions span residues 665 to 676 (LSIGIQVDDAEE) and 687 to 698 (NKFQSVGVQVEE). Residues 914 to 980 (WKQMDPLDKK…QNSATESAES (67 aa)) are disordered. Basic and acidic residues-rich tracts occupy residues 918–927 (DPLDKKERRA) and 943–958 (IRERSLESSQRQEARK). At serine 947 the chain carries Phosphoserine. Polar residues predominate over residues 969-978 (VRQNSATESA). The PDZ-binding signature appears at 990-992 (TRL).

Belongs to the SAPAP family. In terms of assembly, interacts with the guanylate kinase-like domain of DLG1, DLG2, DLG3, DLG4 and AIP1. Interacts with the PDZ domain of SHANK1, SHANK2 and SHANK3. Found in a complex with DLG4 and SHANK1, SHANK2 or SHANK3. Found in a complex with DLG4 and BEGAIN. Interacts with DYL2 and LRFN1. Interacts with MPP2 (via the SH3-Guanylate kinase-like sub-module). In terms of processing, ubiquitinated by TRIM3; leading to proteasomal degradation. In terms of tissue distribution, highest levels in the neocortex, part of the hippocampus, the granule cell layer of the cerebellum, the glomerular layer of the olfactory bulb, the inner plexiform layer of the retina, the ventral and dorsal horn of the spinal cord, the neuromuscular junction and the submandibular ganglion.

Its subcellular location is the cell membrane. It localises to the postsynaptic density. It is found in the synapse. Its function is as follows. Part of the postsynaptic scaffold in neuronal cells. This chain is Disks large-associated protein 1 (Dlgap1), found in Mus musculus (Mouse).